The primary structure comprises 98 residues: Small ribosomal subunit protein uS17 (98 aa).

The protein belongs to the universal ribosomal protein uS17 family. Part of the 30S ribosomal subunit.

Its function is as follows. One of the primary rRNA binding proteins, it binds specifically to the 5'-end of 16S ribosomal RNA. The sequence is that of Small ribosomal subunit protein uS17 from Mesomycoplasma hyopneumoniae (strain 232) (Mycoplasma hyopneumoniae).